The chain runs to 128 residues: Probable 4-amino-4-deoxy-L-arabinose-phosphoundecaprenol flippase subunit ArnF (128 aa).

Residues 1-2 lie on the Cytoplasmic side of the membrane; sequence MG. A helical membrane pass occupies residues 3 to 23; sequence LMWGLFSVIIASAAQLSLGFA. The Periplasmic segment spans residues 24–35; that stretch reads ASHLPPMTHLWD. A helical membrane pass occupies residues 36–56; that stretch reads FIAALLAFGLDARILLLGLLG. Residues 57-76 are Cytoplasmic-facing; the sequence is YLLSVFCWYKTLHKLALSKA. A helical transmembrane segment spans residues 77–97; it reads YALLSMSYVLVWIASMILPGW. At 98–100 the chain is on the periplasmic side; the sequence is EGT. The chain crosses the membrane as a helical span at residues 101–121; it reads FSLKALLGVACIMSGLMLIFL. Residues 122-128 are Cytoplasmic-facing; that stretch reads PTTKQRY.

This sequence belongs to the ArnF family. In terms of assembly, heterodimer of ArnE and ArnF.

The protein localises to the cell inner membrane. It participates in bacterial outer membrane biogenesis; lipopolysaccharide biosynthesis. Its function is as follows. Translocates 4-amino-4-deoxy-L-arabinose-phosphoundecaprenol (alpha-L-Ara4N-phosphoundecaprenol) from the cytoplasmic to the periplasmic side of the inner membrane. The chain is Probable 4-amino-4-deoxy-L-arabinose-phosphoundecaprenol flippase subunit ArnF from Escherichia coli O17:K52:H18 (strain UMN026 / ExPEC).